A 605-amino-acid chain; its full sequence is Replication protein E1 (605 aa).

The Nuclear localization signal signature appears at 76-78 (KRK). Ser81 and Ser89 each carry phosphoserine; by host. The short motif at 88–97 (LSPRLESISL) is the Nuclear export signal element. The tract at residues 145 to 308 (HLGTVDIHYT…TIVGHQSTEA (164 aa)) is DNA-binding region. The SF3 helicase domain maps to 407 to 557 (VNVIMFLAAL…FPMKPDNTPE (151 aa)). Residue 433–440 (GPPNTGKS) coordinates ATP. Lys514 is covalently cross-linked (Glycyl lysine isopeptide (Lys-Gly) (interchain with G-Cter in SUMO)). A disordered region spans residues 580–605 (DQEDEGENGESQQAFQCSARSANEHL). Over residues 588–605 (GESQQAFQCSARSANEHL) the composition is skewed to polar residues.

It belongs to the papillomaviridae E1 protein family. In terms of assembly, can form hexamers. Interacts with E2 protein; this interaction increases E1 DNA binding specificity. Interacts with host DNA polymerase subunit POLA2. Interacts with host single stranded DNA-binding protein RPA1. Interacts with host TOP1; this interaction stimulates the enzymatic activity of TOP1. In terms of processing, phosphorylated. Post-translationally, sumoylated.

It is found in the host nucleus. It catalyses the reaction Couples ATP hydrolysis with the unwinding of duplex DNA by translocating in the 3'-5' direction.. The catalysed reaction is ATP + H2O = ADP + phosphate + H(+). Functionally, ATP-dependent DNA 3'-5' helicase required for initiation of viral DNA replication. It forms a complex with the viral E2 protein. The E1-E2 complex binds to the replication origin which contains binding sites for both proteins. During the initial step, a dimer of E1 interacts with a dimer of protein E2 leading to a complex that binds the viral origin of replication with high specificity. Then, a second dimer of E1 displaces the E2 dimer in an ATP-dependent manner to form the E1 tetramer. Following this, two E1 monomers are added to each half of the site, which results in the formation of two E1 trimers on the viral ori. Subsequently, two hexamers will be created. The double hexamer acts as a bi-directional helicase machinery and unwinds the viral DNA and then recruits the host DNA polymerase to start replication. In Homo sapiens (Human), this protein is Replication protein E1.